The sequence spans 215 residues: Sodium channel regulatory subunit beta-2 (215 aa).

A signal peptide spans 1–29 (MHRDAWLPRPAFSLTGLSLFFSLVPPGRS). Residues 30-157 (MEVTAPTTLS…LEVPPERDST (128 aa)) lie on the Extracellular side of the membrane. One can recognise an Ig-like C2-type domain in the interval 32 to 154 (VTAPTTLSVL…QVLLEVPPER (123 aa)). Asparagine 42, asparagine 66, and asparagine 74 each carry an N-linked (GlcNAc...) asparagine glycan. 2 cysteine pairs are disulfide-bonded: cysteine 50-cysteine 127 and cysteine 72-cysteine 75. The chain crosses the membrane as a helical span at residues 158–179 (VAVIVGASVGGFLAVVILVLMV). Residues 180–215 (VKCVRRKKEQKLSTDDLKTEEEGKMDGEGNAEDGTK) are Cytoplasmic-facing. Positions 188–215 (EQKLSTDDLKTEEEGKMDGEGNAEDGTK) are disordered. Residues 189–215 (QKLSTDDLKTEEEGKMDGEGNAEDGTK) show a composition bias toward basic and acidic residues. Serine 192 carries the post-translational modification Phosphoserine.

This sequence belongs to the sodium channel auxiliary subunit SCN2B (TC 8.A.17) family. As to quaternary structure, a voltage-gated sodium (Nav) channel consists of an ion-conducting pore-forming alpha subunit functional on its own that is regulated by one or more beta subunits. The beta subunit SCN2B is disulfide-linked to the pore-forming alpha subunit. Interacts with SCN1A; regulatory subunit of SCN1A/Nav1.1. Interacts with SCN2A; regulatory subunit of SCN2A/Nav1.2. Interacts with SCN3A; regulatory subunit of SCN3A/Nav1.3. Interacts with SCN5A; regulatory subunit of SCN5A/Nav1.5. Interacts with SCN8A; regulatory subunit of SCN8A/Nav1.6. Interacts with SCN9A; regulatory subunit of SCN9A/Nav1.7. Interacts with SCN10A; regulatory subunit of SCN10A/Nav1.8. Interacts with TNR; may play a crucial role in clustering and regulation of activity of SCN2B-containing Nav channels at nodes of Ranvier.

It localises to the cell membrane. The protein resides in the cell projection. The protein localises to the axon. Its function is as follows. Regulatory subunit of multiple voltage-gated sodium (Nav) channels directly mediating the depolarization of excitable membranes. Navs, also called VGSCs (voltage-gated sodium channels) or VDSCs (voltage-dependent sodium channels), operate by switching between closed and open conformations depending on the voltage difference across the membrane. In the open conformation they allow Na(+) ions to selectively pass through the pore, along their electrochemical gradient. The influx of Na+ ions provokes membrane depolarization, initiating the propagation of electrical signals throughout cells and tissues. The accessory beta subunits participate in localization and functional modulation of the Nav channels. Modulates the activity of SCN1A/Nav1.1, SCN2A/Nav1.2, SCN2A/Nav1.3, SCN5A/Nav1.5, SCN8A/Nav1.6, SCN9A/Nav1.7 and SCN10A/Nav1.8. In Mus musculus (Mouse), this protein is Sodium channel regulatory subunit beta-2.